A 638-amino-acid chain; its full sequence is 1-deoxy-D-xylulose-5-phosphate synthase (638 aa).

Thiamine diphosphate-binding positions include H77 and 118–120 (AHA). Position 149 (D149) interacts with Mg(2+). Residues 150–151 (GS), N178, Y287, and E369 each bind thiamine diphosphate. N178 serves as a coordination point for Mg(2+).

It belongs to the transketolase family. DXPS subfamily. In terms of assembly, homodimer. It depends on Mg(2+) as a cofactor. Thiamine diphosphate serves as cofactor.

It carries out the reaction D-glyceraldehyde 3-phosphate + pyruvate + H(+) = 1-deoxy-D-xylulose 5-phosphate + CO2. It functions in the pathway metabolic intermediate biosynthesis; 1-deoxy-D-xylulose 5-phosphate biosynthesis; 1-deoxy-D-xylulose 5-phosphate from D-glyceraldehyde 3-phosphate and pyruvate: step 1/1. Its function is as follows. Catalyzes the acyloin condensation reaction between C atoms 2 and 3 of pyruvate and glyceraldehyde 3-phosphate to yield 1-deoxy-D-xylulose-5-phosphate (DXP). The protein is 1-deoxy-D-xylulose-5-phosphate synthase of Phenylobacterium zucineum (strain HLK1).